The following is a 68-amino-acid chain: Large ribosomal subunit protein uL29 (68 aa).

It belongs to the universal ribosomal protein uL29 family.

The chain is Large ribosomal subunit protein uL29 from Chlorobaculum parvum (strain DSM 263 / NCIMB 8327) (Chlorobium vibrioforme subsp. thiosulfatophilum).